A 253-amino-acid chain; its full sequence is (S)-2-haloacid dehalogenase (253 aa).

Aspartate 8 acts as the Nucleophile in catalysis. An (S)-2-haloacid-binding positions include alanine 9–tyrosine 10, arginine 39, and serine 114–asparagine 115. The segment at serine 171–aspartate 176 is important for catalytic activity.

The protein belongs to the HAD-like hydrolase superfamily. S-2-haloalkanoic acid dehalogenase family. In terms of assembly, homodimer.

The enzyme catalyses an (S)-2-haloacid + H2O = a (2R)-2-hydroxycarboxylate + a halide anion + H(+). The catalysed reaction is (S)-2-chloropropanoate + H2O = (R)-lactate + chloride + H(+). In terms of biological role, catalyzes the hydrolytic dehalogenation of small (S)-2-haloalkanoic acids to yield the corresponding (R)-2-hydroxyalkanoic acids. Acts on acids of short chain lengths, C(2) to C(4), with inversion of configuration at C-2. Active with 2-halogenated carboxylic acids and converts only the S-isomer (or L-isomer) of 2-chloropropionic acid with inversion of configuration to produce R-lactate (or D-isomer). In Xanthobacter autotrophicus, this protein is (S)-2-haloacid dehalogenase.